The chain runs to 277 residues: Ribosomal RNA small subunit methyltransferase A (277 aa).

Asparagine 27, leucine 29, glycine 54, glutamate 75, aspartate 95, and asparagine 118 together coordinate S-adenosyl-L-methionine.

This sequence belongs to the class I-like SAM-binding methyltransferase superfamily. rRNA adenine N(6)-methyltransferase family. RsmA subfamily.

The protein resides in the cytoplasm. It carries out the reaction adenosine(1518)/adenosine(1519) in 16S rRNA + 4 S-adenosyl-L-methionine = N(6)-dimethyladenosine(1518)/N(6)-dimethyladenosine(1519) in 16S rRNA + 4 S-adenosyl-L-homocysteine + 4 H(+). Specifically dimethylates two adjacent adenosines (A1518 and A1519) in the loop of a conserved hairpin near the 3'-end of 16S rRNA in the 30S particle. May play a critical role in biogenesis of 30S subunits. The polypeptide is Ribosomal RNA small subunit methyltransferase A (Chlamydia muridarum (strain MoPn / Nigg)).